The primary structure comprises 218 residues: Large ribosomal subunit protein uL1 (218 aa).

This sequence belongs to the universal ribosomal protein uL1 family. As to quaternary structure, part of the 50S ribosomal subunit.

In terms of biological role, binds directly to 23S rRNA. Probably involved in E site tRNA release. Functionally, protein L1 is also a translational repressor protein, it controls the translation of its operon by binding to its mRNA. This Metallosphaera sedula (strain ATCC 51363 / DSM 5348 / JCM 9185 / NBRC 15509 / TH2) protein is Large ribosomal subunit protein uL1.